Reading from the N-terminus, the 475-residue chain is Aspartyl/glutamyl-tRNA(Asn/Gln) amidotransferase subunit B (475 aa).

The protein belongs to the GatB/GatE family. GatB subfamily. Heterotrimer of A, B and C subunits.

It carries out the reaction L-glutamyl-tRNA(Gln) + L-glutamine + ATP + H2O = L-glutaminyl-tRNA(Gln) + L-glutamate + ADP + phosphate + H(+). It catalyses the reaction L-aspartyl-tRNA(Asn) + L-glutamine + ATP + H2O = L-asparaginyl-tRNA(Asn) + L-glutamate + ADP + phosphate + 2 H(+). Its function is as follows. Allows the formation of correctly charged Asn-tRNA(Asn) or Gln-tRNA(Gln) through the transamidation of misacylated Asp-tRNA(Asn) or Glu-tRNA(Gln) in organisms which lack either or both of asparaginyl-tRNA or glutaminyl-tRNA synthetases. The reaction takes place in the presence of glutamine and ATP through an activated phospho-Asp-tRNA(Asn) or phospho-Glu-tRNA(Gln). This Bacillus cereus (strain G9842) protein is Aspartyl/glutamyl-tRNA(Asn/Gln) amidotransferase subunit B.